The sequence spans 106 residues: Ferredoxin (106 aa).

2 residues coordinate [3Fe-4S] cluster: cysteine 8 and cysteine 16. 4 residues coordinate [4Fe-4S] cluster: cysteine 20, cysteine 39, cysteine 42, and cysteine 45. The 30-residue stretch at 30–59 (RMLYIHPDECVDCGACEPVCPVEAIYYEDD) folds into the 4Fe-4S ferredoxin-type domain. Position 49 (cysteine 49) interacts with [3Fe-4S] cluster. Positions 81 to 106 (PGGASKVGQTDNDPQAIKDLPPQGED) are disordered.

[4Fe-4S] cluster serves as cofactor. [3Fe-4S] cluster is required as a cofactor.

Functionally, ferredoxins are iron-sulfur proteins that transfer electrons in a wide variety of metabolic reactions. The sequence is that of Ferredoxin (fdxA) from Mycolicibacterium smegmatis (Mycobacterium smegmatis).